The sequence spans 152 residues: MSLSQKEIIERVRAIAEPIVTSMGLELFDVKYRIQAGKWVLSIIIDKLDDYVSTRDCELVSYEIEKVLDSHDFIPGRYYLEVSSPGLDRPLKKIEDFRRFVGKLVKVKTKKTYRGYIVDVNMETKEIILRVDNENITIKYDDVKSANLEIEL.

It belongs to the RimP family.

The protein localises to the cytoplasm. Functionally, required for maturation of 30S ribosomal subunits. The chain is Ribosome maturation factor RimP from Fervidobacterium nodosum (strain ATCC 35602 / DSM 5306 / Rt17-B1).